Reading from the N-terminus, the 204-residue chain is Large ribosomal subunit protein uL18 (204 aa).

The protein belongs to the universal ribosomal protein uL18 family. Part of the 50S ribosomal subunit. Contacts the 5S and 23S rRNAs.

This is one of the proteins that bind and probably mediate the attachment of the 5S RNA into the large ribosomal subunit, where it forms part of the central protuberance. The chain is Large ribosomal subunit protein uL18 from Ignicoccus hospitalis (strain KIN4/I / DSM 18386 / JCM 14125).